A 460-amino-acid polypeptide reads, in one-letter code: Hemopexin (460 aa).

An N-terminal signal peptide occupies residues 1 to 23 (MARTVVALNILVLLGLCWSLAVA). N-linked (GlcNAc...) asparagine glycosylation is found at asparagine 38 and asparagine 64. Disulfide bonds link cysteine 50–cysteine 230, cysteine 148–cysteine 153, and cysteine 187–cysteine 199. Hemopexin repeat units lie at residues 53–93 (AWSF…WKNP), 94–138 (VTSV…FPGI), 139–183 (PYPP…SWPA), and 184–230 (VGNC…FISC). Histidine 79 lines the heme pocket. Histidine 149 lines the heme pocket. N-linked (GlcNAc...) asparagine glycosylation occurs at asparagine 186. Histidine 235 lines the heme pocket. 2 N-linked (GlcNAc...) asparagine glycosylation sites follow: asparagine 240 and asparagine 246. Cystine bridges form between cysteine 255/cysteine 458, cysteine 364/cysteine 406, and cysteine 416/cysteine 433. Hemopexin repeat units lie at residues 257–302 (ADPG…WPQG), 303–350 (PSAV…LGSP), 355–394 (LDTIDAAFSCPGSSKLYVTSGRRLWWLDLKSGAQATWAEL), and 398–448 (HEKV…SLPQ). Histidine 291 provides a ligand contact to heme.

Belongs to the hemopexin family. As to expression, expressed by the liver and secreted in plasma.

It is found in the secreted. Binds heme and transports it to the liver for breakdown and iron recovery, after which the free hemopexin returns to the circulation. This is Hemopexin (Hpx) from Rattus norvegicus (Rat).